Reading from the N-terminus, the 196-residue chain is Adenylate kinase (196 aa).

9–17 (GIPGVGKST) is a binding site for ATP.

It belongs to the archaeal adenylate kinase family.

The protein localises to the cytoplasm. It carries out the reaction AMP + ATP = 2 ADP. The chain is Adenylate kinase from Thermococcus kodakarensis (strain ATCC BAA-918 / JCM 12380 / KOD1) (Pyrococcus kodakaraensis (strain KOD1)).